A 320-amino-acid polypeptide reads, in one-letter code: Glycerol-3-phosphate dehydrogenase [NAD(P)+] (320 aa).

The NADPH site is built by Phe11, Arg30, and Lys102. Residues Lys102, Gly130, and Ser132 each contribute to the sn-glycerol 3-phosphate site. Ala134 lines the NADPH pocket. Lys185, Asp238, Ser248, Arg249, and Asn250 together coordinate sn-glycerol 3-phosphate. Lys185 functions as the Proton acceptor in the catalytic mechanism. NADPH is bound at residue Arg249. Glu270 lines the NADPH pocket.

Belongs to the NAD-dependent glycerol-3-phosphate dehydrogenase family.

The protein resides in the cytoplasm. It catalyses the reaction sn-glycerol 3-phosphate + NAD(+) = dihydroxyacetone phosphate + NADH + H(+). It carries out the reaction sn-glycerol 3-phosphate + NADP(+) = dihydroxyacetone phosphate + NADPH + H(+). It participates in membrane lipid metabolism; glycerophospholipid metabolism. Its function is as follows. Catalyzes the reduction of the glycolytic intermediate dihydroxyacetone phosphate (DHAP) to sn-glycerol 3-phosphate (G3P), the key precursor for phospholipid synthesis. This Roseobacter denitrificans (strain ATCC 33942 / OCh 114) (Erythrobacter sp. (strain OCh 114)) protein is Glycerol-3-phosphate dehydrogenase [NAD(P)+].